The primary structure comprises 429 residues: Probable M18 family aminopeptidase 2 (429 aa).

His82, His156, and His401 together coordinate Zn(2+).

The protein belongs to the peptidase M18 family. Zn(2+) serves as cofactor.

This Ectopseudomonas mendocina (strain ymp) (Pseudomonas mendocina) protein is Probable M18 family aminopeptidase 2.